The primary structure comprises 625 residues: Phosphomethylpyrimidine synthase (625 aa).

Substrate is bound by residues Asn-230, Met-259, Tyr-288, His-324, 344–346, 385–388, and Glu-424; these read SRG and DGLR. His-428 is a binding site for Zn(2+). Tyr-451 serves as a coordination point for substrate. His-492 provides a ligand contact to Zn(2+). [4Fe-4S] cluster contacts are provided by Cys-572, Cys-575, and Cys-580.

Belongs to the ThiC family. As to quaternary structure, homodimer. The cofactor is [4Fe-4S] cluster.

It carries out the reaction 5-amino-1-(5-phospho-beta-D-ribosyl)imidazole + S-adenosyl-L-methionine = 4-amino-2-methyl-5-(phosphooxymethyl)pyrimidine + CO + 5'-deoxyadenosine + formate + L-methionine + 3 H(+). The protein operates within cofactor biosynthesis; thiamine diphosphate biosynthesis. Catalyzes the synthesis of the hydroxymethylpyrimidine phosphate (HMP-P) moiety of thiamine from aminoimidazole ribotide (AIR) in a radical S-adenosyl-L-methionine (SAM)-dependent reaction. The sequence is that of Phosphomethylpyrimidine synthase from Xanthomonas axonopodis pv. citri (strain 306).